The following is a 309-amino-acid chain: Non-homologous end-joining factor 1 (309 aa).

A globular head region spans residues 1–134 (MEAVLSALPW…TPVAVVCRQL (134 aa)). Residues 223-298 (GKTGRKRKHS…AGSEDRSTSR (76 aa)) form a C-terminal tail region. The disordered stretch occupies residues 223–309 (GKTGRKRKHS…KKKKAVGLFR (87 aa)). A compositionally biased stretch (basic and acidic residues) spans 243 to 252 (HITDHQHISE). 2 stretches are compositionally biased toward polar residues: residues 253–265 (STDVGPSLASQEH) and 273–290 (RSQVANSQQTLPLSSTAG). Residues 297–309 (SRAKKKKAVGLFR) show a composition bias toward basic residues. The XLM signature appears at 299-309 (AKKKKAVGLFR).

It belongs to the XRCC4-XLF family. XLF subfamily. Homodimer. Interacts with xrcc4; the interaction is direct and is mediated via a head-to-head interaction between N-terminal head regions. Component of the core long-range non-homologous end joining (NHEJ) complex (also named DNA-PK complex) composed of prkdc/DNA-PKcs, lig4, xrcc4, xrcc6/Ku70, xrcc5/Ku80 and nhej1/xlf.

The protein resides in the nucleus. It localises to the chromosome. In terms of biological role, DNA repair protein involved in DNA non-homologous end joining (NHEJ); it is required for double-strand break (DSB) repair and V(D)J recombination and is also involved in telomere maintenance. Plays a key role in NHEJ by promoting the ligation of various mismatched and non-cohesive ends. In some studies, has been shown to associate with xrcc4 to form alternating helical filaments that bridge DNA and act like a bandage, holding together the broken DNA until it is repaired. Alternatively, it has also been shown that rather than forming filaments, a single nhej1 dimer interacts through both head domains with xrcc4 to promote the close alignment of DNA ends. The xrcc4-nhej1/xlf subcomplex binds to the DNA fragments of a DSB in a highly diffusive manner and robustly bridges two independent DNA molecules, holding the broken DNA fragments in close proximity to one other. The mobility of the bridges ensures that the ends remain accessible for further processing by other repair factors. This is Non-homologous end-joining factor 1 (nhej1) from Danio rerio (Zebrafish).